A 670-amino-acid polypeptide reads, in one-letter code: Thrombospondin-type laminin G domain and EAR repeat-containing protein (670 aa).

Residues 1-20 (MSALLMLCAVLLLLGTPSRG) form the signal peptide. The 220-residue stretch at 59-278 (GLQFSATEPR…KVTLGSRPPC (220 aa)) folds into the Laminin G-like domain. 7 EAR repeats span residues 314 to 359 (DYVE…KWTD), 361 to 409 (KFVS…KWSP), 413 to 461 (KFTL…RWNP), 465 to 513 (LFEA…IWLV), 515 to 571 (AFQL…ELNI), 575 to 623 (TFVK…RWQG), and 626 to 669 (GFVA…KLRT). Asn-498 carries an N-linked (GlcNAc...) asparagine glycan.

In terms of tissue distribution, in the organ of Corti, expression at postnatal day 1 (P1) is restricted to the basal region of the stereocilia of inner and outer hair cells (at protein level). Expressed in the organ of Corti at P1 and P7, in cochlear ganglion, stria vascularis and vestibular ends at P7, and in inferior colliculus, remaining brainstem, cerebellum, brain hemispheres and retina at P1, P7 and in the adult. Also detected in adult liver, lung, kidney, intestine and testis but not in heart or skeletal muscle.

Its subcellular location is the secreted. It is found in the cell surface. The protein resides in the cell projection. The protein localises to the stereocilium. In terms of biological role, plays a critical role in tooth and hair follicle morphogenesis through regulation of the Notch signaling pathway. May play a role in development or function of the auditory system. The chain is Thrombospondin-type laminin G domain and EAR repeat-containing protein from Mus musculus (Mouse).